Consider the following 467-residue polypeptide: Putative odorant receptor 85e (467 aa).

Residues 1–60 (MASLQFHGNVDADIRYDISLDPARESNLFRLLMGLQLANGTKPSPRLPKWWPKRLEMIGK) are Cytoplasmic-facing. Residues 61–81 (VLPKAYCSMVIFTSLHLGVLF) form a helical membrane-spanning segment. Over 82–98 (TKTTLDVLPTGELQAIT) the chain is Extracellular. A helical transmembrane segment spans residues 99–119 (DALTMTIIYFFTGYGTIYWCL). Residues 120 to 159 (RSRRLLAYMEHMNREYRHHSLAGVTFVSSHAAFRMSRNFT) are Cytoplasmic-facing. Residues 160-180 (VVWIMSCLLGVISWGVSPLML) traverse the membrane as a helical segment. Over 181-212 (GIRMLPLQCWYPFDALGPGTYTAVYATQLFGQ) the chain is Extracellular. The chain crosses the membrane as a helical span at residues 213–233 (IMVGMTFGFGGSLFVTLSLLL). At 234 to 286 (LGQFDVLYCSLKNLDAHTKLLGGESVNGLSSLQEELLLGDSKRELNQYVLLQE) the chain is on the cytoplasmic side. Residues 287-307 (HPTDLLRLSAGRKCPDQGNAF) form a helical membrane-spanning segment. Residues 308–334 (HNALVECIRLHRFILHCSQELENLFSP) are Extracellular-facing. Residues 335–355 (YCLVKSLQITFQLCLLVFVGV) form a helical membrane-spanning segment. Residues 356 to 367 (SGTREVLRIVNQ) are Cytoplasmic-facing. The helical transmembrane segment at 368–388 (LQYLGLTIFELLMFTYCGELL) threads the bilayer. Over 389 to 467 (SRHSIRSGDA…LAAKKTESEL (79 aa)) the chain is Extracellular.

The protein belongs to the insect chemoreceptor superfamily. Heteromeric odorant receptor channel (TC 1.A.69) family. Or2a subfamily. Interacts with Orco. Complexes exist early in the endomembrane system in olfactory sensory neurons (OSNs), coupling these complexes to the conserved ciliary trafficking pathway. In terms of tissue distribution, expressed in 15% of the 120 sensory neurons within the maxillary palp.

Its subcellular location is the cell membrane. Its function is as follows. Odorant receptor which mediates acceptance or avoidance behavior, depending on its substrates. The odorant receptor repertoire encodes a large collection of odor stimuli that vary widely in identity, intensity, and duration. May form a complex with Orco to form odorant-sensing units, providing sensitive and prolonged odorant signaling and calcium permeability. The protein is Putative odorant receptor 85e (Or85e) of Drosophila melanogaster (Fruit fly).